Reading from the N-terminus, the 528-residue chain is PH domain-containing protein DDB_G0267786 (528 aa).

The PH domain maps to 59 to 180 (SDVFSGYLVK…WIEIFKTCCR (122 aa)).

This is PH domain-containing protein DDB_G0267786 from Dictyostelium discoideum (Social amoeba).